The chain runs to 315 residues: Aspartate carbamoyltransferase catalytic subunit (315 aa).

The carbamoyl phosphate site is built by Arg-65 and Thr-66. Residue Lys-93 coordinates L-aspartate. Residues Arg-115, His-145, and Gln-148 each coordinate carbamoyl phosphate. Positions 179 and 234 each coordinate L-aspartate. Carbamoyl phosphate contacts are provided by Gly-275 and Pro-276.

The protein belongs to the aspartate/ornithine carbamoyltransferase superfamily. ATCase family. Heterododecamer (2C3:3R2) of six catalytic PyrB chains organized as two trimers (C3), and six regulatory PyrI chains organized as three dimers (R2).

The catalysed reaction is carbamoyl phosphate + L-aspartate = N-carbamoyl-L-aspartate + phosphate + H(+). It participates in pyrimidine metabolism; UMP biosynthesis via de novo pathway; (S)-dihydroorotate from bicarbonate: step 2/3. In terms of biological role, catalyzes the condensation of carbamoyl phosphate and aspartate to form carbamoyl aspartate and inorganic phosphate, the committed step in the de novo pyrimidine nucleotide biosynthesis pathway. The polypeptide is Aspartate carbamoyltransferase catalytic subunit (Xanthomonas euvesicatoria pv. vesicatoria (strain 85-10) (Xanthomonas campestris pv. vesicatoria)).